The following is a 345-amino-acid chain: Phosphoribosylformylglycinamidine cyclo-ligase (345 aa).

The protein belongs to the AIR synthase family.

The protein localises to the cytoplasm. The enzyme catalyses 2-formamido-N(1)-(5-O-phospho-beta-D-ribosyl)acetamidine + ATP = 5-amino-1-(5-phospho-beta-D-ribosyl)imidazole + ADP + phosphate + H(+). It functions in the pathway purine metabolism; IMP biosynthesis via de novo pathway; 5-amino-1-(5-phospho-D-ribosyl)imidazole from N(2)-formyl-N(1)-(5-phospho-D-ribosyl)glycinamide: step 2/2. This is Phosphoribosylformylglycinamidine cyclo-ligase from Prochlorococcus marinus (strain MIT 9211).